Here is a 466-residue protein sequence, read N- to C-terminus: Clusterin-like protein 1 (466 aa).

A signal peptide spans 1–20 (MKPPLLVFIVCLLWLKDSHC). The stretch at 57 to 111 (KQMKIMMERKEKEHTNLMSTLKKCREEKQEALKLLNEVQEHLEEEERLCRESLAD) forms a coiled coil. Disulfide bonds link cysteine 105-cysteine 333, cysteine 116-cysteine 325, cysteine 119-cysteine 322, cysteine 124-cysteine 315, and cysteine 131-cysteine 305. Residues asparagine 196, asparagine 257, asparagine 311, asparagine 351, asparagine 412, and asparagine 431 are each glycosylated (N-linked (GlcNAc...) asparagine).

The protein belongs to the clusterin family.

The protein resides in the secreted. The protein is Clusterin-like protein 1 (CLUL1) of Homo sapiens (Human).